The chain runs to 85 residues: Progonadoliberin-2 (85 aa).

An N-terminal signal peptide occupies residues 1–23; that stretch reads MCASRLVLLLGLLLCVGAHLSSG. Q24 is subject to Pyrrolidone carboxylic acid. G33 carries the post-translational modification Glycine amide.

This sequence belongs to the GnRH family. As to expression, midbrain tegmentum.

The protein localises to the secreted. Its function is as follows. Stimulates the secretion of gonadotropins. The protein is Progonadoliberin-2 (gnrh2) of Verasper moseri (Barfin flounder).